Reading from the N-terminus, the 1293-residue chain is Phosphoribosylformylglycinamidine synthase (1293 aa).

ATP contacts are provided by residues 305–316 and alanine 676; that span reads GAATGSGGEIRD. Residues 305–327 form a disordered region; that stretch reads GAATGSGGEIRDEGATGRGSKPK. 4 residues coordinate Mg(2+): aspartate 677, glutamate 716, asparagine 720, and aspartate 884. Serine 886 provides a ligand contact to ATP. Positions 1040 to 1293 constitute a Glutamine amidotransferase type-1 domain; the sequence is MAILREQGVN…MFRNARVNLG (254 aa). The active-site Nucleophile is the cysteine 1133. Residues histidine 1258 and glutamate 1260 contribute to the active site.

The protein in the N-terminal section; belongs to the FGAMS family. As to quaternary structure, monomer.

It localises to the cytoplasm. It catalyses the reaction N(2)-formyl-N(1)-(5-phospho-beta-D-ribosyl)glycinamide + L-glutamine + ATP + H2O = 2-formamido-N(1)-(5-O-phospho-beta-D-ribosyl)acetamidine + L-glutamate + ADP + phosphate + H(+). The protein operates within purine metabolism; IMP biosynthesis via de novo pathway; 5-amino-1-(5-phospho-D-ribosyl)imidazole from N(2)-formyl-N(1)-(5-phospho-D-ribosyl)glycinamide: step 1/2. Phosphoribosylformylglycinamidine synthase involved in the purines biosynthetic pathway. Catalyzes the ATP-dependent conversion of formylglycinamide ribonucleotide (FGAR) and glutamine to yield formylglycinamidine ribonucleotide (FGAM) and glutamate. The polypeptide is Phosphoribosylformylglycinamidine synthase (Shewanella oneidensis (strain ATCC 700550 / JCM 31522 / CIP 106686 / LMG 19005 / NCIMB 14063 / MR-1)).